A 115-amino-acid chain; its full sequence is T cell receptor delta variable 1 (115 aa).

The first 21 residues, 1–21 (MLFSSLLCVFVAFSYSGSSVA), serve as a signal peptide directing secretion. In terms of domain architecture, Ig-like spans 22–115 (QKVTQAQSSV…SAKYFCALGE (94 aa)). Cysteine 43 and cysteine 111 are oxidised to a cystine.

As to quaternary structure, gamma-delta TR is a heterodimer composed of a gamma and delta chain; disulfide-linked. The gamma-delta TR is associated with the transmembrane signaling CD3 coreceptor proteins following the stoichiometry: a single gamma-delta TR heterodimer associates with one CD3D-CD3E heterodimer, one CD3G-CD3E heterodimer and one CD247 homodimer forming a stable octameric structure. Upon activation, gamma-delta TR complex associates with FCER1G to initiate intracellular signaling.

The protein resides in the cell membrane. In terms of biological role, v region of the variable domain of T cell receptor (TR) delta chain that participates in the antigen recognition. Gamma-delta TRs recognize a variety of self and foreign non-peptide antigens frequently expressed at the epithelial boundaries between the host and external environment, including endogenous lipids presented by MH-like protein CD1D and phosphoantigens presented by butyrophilin-like molecule BTN3A1. Upon antigen recognition induces rapid, innate-like immune responses involved in pathogen clearance and tissue repair. Binding of gamma-delta TR complex to antigen triggers phosphorylation of immunoreceptor tyrosine-based activation motifs (ITAMs) in the CD3 chains by the LCK and FYN kinases, allowing the recruitment, phosphorylation, and activation of ZAP70 that facilitates phosphorylation of the scaffolding proteins LCP2 and LAT. This lead to the formation of a supramolecular signalosome that recruits the phospholipase PLCG1, resulting in calcium mobilization and ERK activation, ultimately leading to T cell expansion and differentiation into effector cells. Gamma-delta TRs are produced through somatic rearrangement of a limited repertoire of variable (V), diversity (D), and joining (J) genes. The potential diversity of gamma-delta TRs is conferred by the unique ability to rearrange (D) genes in tandem and to utilize all three reading frames. The combinatorial diversity is considerably increased by the sequence exonuclease trimming and random nucleotide (N) region additions which occur during the V-(D)-J rearrangements. The chain is T cell receptor delta variable 1 from Homo sapiens (Human).